The primary structure comprises 193 residues: Ubiquitin-conjugating enzyme E2 E1 (193 aa).

The tract at residues 1–45 (MSDDDSRASTSSSSSSSSNQQTEKETNTPKKKESKVSMSKNSKLL) is disordered. S2 carries the N-acetylserine modification. Low complexity predominate over residues 8–18 (ASTSSSSSSSS). Residues 22–35 (TEKETNTPKKKESK) show a composition bias toward basic and acidic residues. Over residues 36-45 (VSMSKNSKLL) the composition is skewed to polar residues. The 147-residue stretch at 47-193 (TSAKRIQKEL…ARQWTKRYAT (147 aa)) folds into the UBC core domain. The active-site Glycyl thioester intermediate is C131. K136 is covalently cross-linked (Glycyl lysine isopeptide (Lys-Gly) (interchain with G-Cter in ISG15)).

It belongs to the ubiquitin-conjugating enzyme family. As to quaternary structure, interacts with RNF14. Post-translationally, ISGylation suppresses ubiquitin E2 enzyme activity. In terms of processing, autoubiquitinated in vitro.

Its subcellular location is the nucleus. The catalysed reaction is S-ubiquitinyl-[E1 ubiquitin-activating enzyme]-L-cysteine + [E2 ubiquitin-conjugating enzyme]-L-cysteine = [E1 ubiquitin-activating enzyme]-L-cysteine + S-ubiquitinyl-[E2 ubiquitin-conjugating enzyme]-L-cysteine.. The enzyme catalyses S-ubiquitinyl-[E1 ubiquitin-activating enzyme]-L-cysteine + [acceptor protein]-L-lysine = [E1 ubiquitin-activating enzyme]-L-cysteine + N(6)-monoubiquitinyl-[acceptor protein]-L-lysine.. It participates in protein modification; protein ubiquitination. In terms of biological role, accepts ubiquitin from the E1 complex and catalyzes its covalent attachment to other proteins. Catalyzes the covalent attachment of ISG15 to other proteins. Mediates the selective degradation of short-lived and abnormal proteins. In vitro also catalyzes 'Lys-48'-linked polyubiquitination. Catalyzes monoubiquitination of other proteins in both an E3-dependent and E3-independent manner. The protein is Ubiquitin-conjugating enzyme E2 E1 of Homo sapiens (Human).